The following is a 292-amino-acid chain: RNA polymerase II transcriptional coactivator SUB1 (292 aa).

Disordered regions lie at residues methionine 1–proline 31 and leucine 117–glutamate 292. A compositionally biased stretch (low complexity) spans leucine 20 to proline 31. A Phosphoserine modification is found at serine 119. 4 stretches are compositionally biased toward basic and acidic residues: residues asparagine 133–arginine 166, proline 179–alanine 191, lysine 204–glutamate 240, and alanine 251–asparagine 267. Phosphoserine occurs at positions 268, 269, and 289.

Belongs to the transcriptional coactivator PC4 family.

Its subcellular location is the nucleus. Plays a role in the release of TFIIB from the transcription complex during transcription initiation. Binds to TFIIB and specifically inhibits the formation of the TBP-TFIIB-promoter complexes. This is RNA polymerase II transcriptional coactivator SUB1 (SUB1) from Saccharomyces cerevisiae (strain ATCC 204508 / S288c) (Baker's yeast).